Here is a 123-residue protein sequence, read N- to C-terminus: Large ribosomal subunit protein eL8 (123 aa).

It belongs to the eukaryotic ribosomal protein eL8 family. As to quaternary structure, part of the 50S ribosomal subunit. Probably part of the RNase P complex.

It localises to the cytoplasm. Multifunctional RNA-binding protein that recognizes the K-turn motif in ribosomal RNA, the RNA component of RNase P, box H/ACA, box C/D and box C'/D' sRNAs. This chain is Large ribosomal subunit protein eL8, found in Pyrococcus abyssi (strain GE5 / Orsay).